The sequence spans 554 residues: NADH-quinone oxidoreductase subunit N 3 (554 aa).

The next 14 membrane-spanning stretches (helical) occupy residues 35-55 (LMPV…EAFV), 65-85 (LFLT…LAAG), 105-125 (PTLF…FTFA), 161-181 (GFTT…LLVF), 187-207 (LLTL…LCAV), 222-242 (YFLL…LLYG), 275-295 (ALLL…VGAV), 322-342 (VAAF…LAWD), 345-365 (PVMW…AITQ), 371-391 (LLAY…IAAS), 398-418 (VLFY…VVTL), 442-462 (VAAV…TSGF), 476-496 (GAGA…FFYI), and 525-545 (IAVG…FLDL).

Belongs to the complex I subunit 2 family. In terms of assembly, NDH-1 is composed of 14 different subunits. Subunits NuoA, H, J, K, L, M, N constitute the membrane sector of the complex.

It localises to the cell membrane. It catalyses the reaction a quinone + NADH + 5 H(+)(in) = a quinol + NAD(+) + 4 H(+)(out). Functionally, NDH-1 shuttles electrons from NADH, via FMN and iron-sulfur (Fe-S) centers, to quinones in the respiratory chain. The immediate electron acceptor for the enzyme in this species is believed to be a menaquinone. Couples the redox reaction to proton translocation (for every two electrons transferred, four hydrogen ions are translocated across the cytoplasmic membrane), and thus conserves the redox energy in a proton gradient. The protein is NADH-quinone oxidoreductase subunit N 3 of Streptomyces griseus subsp. griseus (strain JCM 4626 / CBS 651.72 / NBRC 13350 / KCC S-0626 / ISP 5235).